The chain runs to 120 residues: NAD(P)H-quinone oxidoreductase subunit 3, chloroplastic (120 aa).

A run of 3 helical transmembrane segments spans residues 9 to 29 (IFWA…IISG), 60 to 80 (ICYY…VFLY), and 88 to 108 (ILGV…IVGS).

It belongs to the complex I subunit 3 family. As to quaternary structure, NDH is composed of at least 16 different subunits, 5 of which are encoded in the nucleus.

It localises to the plastid. The protein localises to the chloroplast thylakoid membrane. The enzyme catalyses a plastoquinone + NADH + (n+1) H(+)(in) = a plastoquinol + NAD(+) + n H(+)(out). The catalysed reaction is a plastoquinone + NADPH + (n+1) H(+)(in) = a plastoquinol + NADP(+) + n H(+)(out). Its function is as follows. NDH shuttles electrons from NAD(P)H:plastoquinone, via FMN and iron-sulfur (Fe-S) centers, to quinones in the photosynthetic chain and possibly in a chloroplast respiratory chain. The immediate electron acceptor for the enzyme in this species is believed to be plastoquinone. Couples the redox reaction to proton translocation, and thus conserves the redox energy in a proton gradient. This is NAD(P)H-quinone oxidoreductase subunit 3, chloroplastic from Morus indica (Mulberry).